The sequence spans 153 residues: Large ribosomal subunit protein bL9 (153 aa).

It belongs to the bacterial ribosomal protein bL9 family.

Its function is as follows. Binds to the 23S rRNA. The chain is Large ribosomal subunit protein bL9 from Gloeobacter violaceus (strain ATCC 29082 / PCC 7421).